We begin with the raw amino-acid sequence, 174 residues long: Thiol-disulfide oxidoreductase ResA (174 aa).

A helical; Signal-anchor for type II membrane protein transmembrane segment spans residues 11-30 (TAILLVLLAAIGYTIYTNFF). In terms of domain architecture, Thioredoxin spans 36–174 (VAVGSTAPDF…IERHLESIKP (139 aa)). Cysteine 74 and cysteine 77 form a disulfide bridge.

The protein belongs to the thioredoxin family. ResA subfamily.

The protein resides in the cell membrane. It participates in protein modification; cytochrome c assembly. Functionally, thiol-disulfide oxidoreductase which is required in disulfide reduction during c-type cytochrome synthesis. May accept reducing equivalents from CcdA, leading to breakage of disulfide bonds in apocytochrome c; following this reduction heme can be covalently attached. The polypeptide is Thiol-disulfide oxidoreductase ResA (Geobacillus kaustophilus (strain HTA426)).